Here is a 213-residue protein sequence, read N- to C-terminus: Protein FAM177A1 (213 aa).

Methionine 1 carries the N-acetylmethionine modification. Phosphoserine is present on serine 70. Threonine 71 bears the Phosphothreonine mark. The stretch at 136 to 173 (IDEYYRMKKEEEEEEEENRMSEEAEKQYQQNKLQTDSI) forms a coiled coil. Residues 147–175 (EEEEEENRMSEEAEKQYQQNKLQTDSIVQ) are disordered. Residues 162–175 (QYQQNKLQTDSIVQ) show a composition bias toward polar residues.

It belongs to the FAM177 family.

The protein is Protein FAM177A1 (FAM177A1) of Homo sapiens (Human).